Reading from the N-terminus, the 932-residue chain is Glycine dehydrogenase (decarboxylating) (932 aa).

At Lys685 the chain carries N6-(pyridoxal phosphate)lysine.

The protein belongs to the GcvP family. The glycine cleavage system is composed of four proteins: P, T, L and H. Requires pyridoxal 5'-phosphate as cofactor.

It catalyses the reaction N(6)-[(R)-lipoyl]-L-lysyl-[glycine-cleavage complex H protein] + glycine + H(+) = N(6)-[(R)-S(8)-aminomethyldihydrolipoyl]-L-lysyl-[glycine-cleavage complex H protein] + CO2. Functionally, the glycine cleavage system catalyzes the degradation of glycine. The P protein binds the alpha-amino group of glycine through its pyridoxal phosphate cofactor; CO(2) is released and the remaining methylamine moiety is then transferred to the lipoamide cofactor of the H protein. This chain is Glycine dehydrogenase (decarboxylating), found in Brucella canis (strain ATCC 23365 / NCTC 10854 / RM-666).